A 467-amino-acid polypeptide reads, in one-letter code: MKHAIKNIHFIGLGGSGMSGIAEVLHNLGYVISGSDLSDSATLQRLARLGIKTFVGHAASNLAKVDAVVTSTAVQADNPEVLAAREKRIPVVPRALMLAELMRLKQGIAIAGTHGKTTTTSLVASVLAEAGLDPTFVIGGRLNSAGANARLGLGDYIVVEADESDASFLNLLPVMAVVTNIDADHMETYGHDFANLKKAFVDFLHRMPFYGTAILCTDDPAVREIVPQVSCPITSYGFGEDAQVRAVNVRPVGAQMHFTAQRRNGVTLPDLEVVLNLAGEHNVLNALSAIAVAVELNVPDTAVQKALAEFKGVGRRFQSYGDVPAKGGGHFTVIEDYGHHPVEVAATLAAARGAFPGRRLVLAFQPHRYTRTRDCFEDFVKVIGQADAVLLAEVYAAGETPIVAADGRSLARALRVAGKLEPVFVSEIDAMPQAILDNALGGDVVMCMGAGSIGLVPGKLLELEGAQ.

Gly112 to Thr118 serves as a coordination point for ATP.

This sequence belongs to the MurCDEF family.

It localises to the cytoplasm. It carries out the reaction UDP-N-acetyl-alpha-D-muramate + L-alanine + ATP = UDP-N-acetyl-alpha-D-muramoyl-L-alanine + ADP + phosphate + H(+). It participates in cell wall biogenesis; peptidoglycan biosynthesis. In terms of biological role, cell wall formation. The polypeptide is UDP-N-acetylmuramate--L-alanine ligase (Polaromonas sp. (strain JS666 / ATCC BAA-500)).